An 818-amino-acid polypeptide reads, in one-letter code: Histone H2A deubiquitinase MYSM1 (818 aa).

The 52-residue stretch at 107 to 158 (SSPVKWTKEEKNLFEQGLATFGRRWTSIARLIGSRSVLQVKNYARHYFKNKC) folds into the SANT domain. Positions 344 to 442 (IKPPDQELEI…FGCEQAIYNR (99 aa)) constitute an SWIRM domain. The region spanning 548 to 680 (VKVSCEAMLV…PHPQSQVACL (133 aa)) is the MPN domain. The Zn(2+) site is built by His-627, His-629, and Asp-640. Positions 627 to 640 (HSHPAFDPNPSIRD) match the JAMM motif motif. The LXXLL motif motif lies at 745 to 749 (LQKLL).

The protein belongs to the peptidase M67A family. MYSM1 subfamily.

It localises to the nucleus. In terms of biological role, metalloprotease that specifically deubiquitinates monoubiquitinated histone H2A, a specific tag for epigenetic transcriptional repression, thereby acting as a coactivator. Preferentially deubiquitinates monoubiquitinated H2A in hyperacetylated nucleosomes. Deubiquitination of histone H2A leads to facilitate the phosphorylation and dissociation of histone H1 from the nucleosome. Acts as a coactivator by participating in the initiation and elongation steps of androgen receptor (AR)-induced gene activation. The protein is Histone H2A deubiquitinase MYSM1 (mysm1) of Xenopus laevis (African clawed frog).